Here is a 616-residue protein sequence, read N- to C-terminus: Bifunctional 2-aminoethylphosphonate cytidylyltransferase/aminotransferase (616 aa).

Residues 1-240 (MIKQAVILAG…VKNIYPHIVE (240 aa)) form a 2-aminoethylphosphonate cytidylyltransferase region. CMP-(2-aminoethyl)phosphonate-binding residues include Leu-8, Gly-10, Gly-11, Lys-25, Thr-83, Thr-88, Glu-104, and Ser-105. Mg(2+) contacts are provided by Asp-106 and Asp-136. CMP-(2-aminoethyl)phosphonate-binding residues include Asp-136, Lys-153, and Glu-196. Positions 220 and 222 each coordinate Mg(2+). Positions 250–616 (EVLLNPGPAT…EYMNGIGVGV (367 aa)) are 2-aminoethylphosphonate aminotransferase. Residues Ser-313, Gly-314, Thr-315, Thr-390, Lys-441, and Thr-490 each coordinate pyridoxal 5'-phosphate.

The protein in the N-terminal section; belongs to the LicC/PntC cytidylyltransferase family. This sequence in the C-terminal section; belongs to the class-V pyridoxal-phosphate-dependent aminotransferase family. PhnW subfamily. In terms of assembly, homodimer. Requires Mg(2+) as cofactor. It depends on Zn(2+) as a cofactor. Pyridoxal 5'-phosphate serves as cofactor.

The catalysed reaction is (2-aminoethyl)phosphonate + CTP = CMP-(2-aminoethyl)phosphonate + diphosphate. It carries out the reaction (2-aminoethyl)phosphonate + pyruvate = phosphonoacetaldehyde + L-alanine. Its pathway is phosphorus metabolism; phosphonate biosynthesis. Cytidylyltransferase activity is inhibited in the presence of EDTA and is restored by the addition of Mg(2+) or Zn(2+). In terms of biological role, bifunctional transferase involved in the biosynthesis of cell-surface phosphonates. The aminotransferase region catalyzes the transformation of phosphonoacetaldehyde (PnAA) to 2-aminoethylphosphonate (AEP). The cytidylyltransferase region catalyzes the activation of 2-aminoethylphosphonate (AEP) to CMP-2-aminoethylphosphonate (CMP-AEP). Cannot use phosphocholine. Exhibits strong activity towards CTP, limited activity towards ATP and no activity with GTP. The polypeptide is Bifunctional 2-aminoethylphosphonate cytidylyltransferase/aminotransferase (Treponema denticola (strain ATCC 35405 / DSM 14222 / CIP 103919 / JCM 8153 / KCTC 15104)).